A 311-amino-acid chain; its full sequence is MRRAALWLWLCALALRLQPALLHSVAVNMPPEDQDGSGDDSDNFSGSGAGALPDITSSHTPSTWKDLGPVTTTATAPEPTSPDAIAASTTILPTGEQPEGGRAVLLAEVEPGLTAQKEATHPPSETTLHPTTHSVSTARATMAPGPATSHPHRDVQPDHHETSAPTGRGRMEPHRPHVEEGGPPATEKAAEEDPSTQIPVGEGSGEQDFTFDLSGENAAGAAGEPGSRNGAPEDPEATGATGASQGLLDRKEVLGGVIAGGLVGLIFAVCLVGFMLYRMKKKDEGSYSLEEPKQANGGAYQKPTKQEEFYA.

The signal sequence occupies residues 1 to 22 (MRRAALWLWLCALALRLQPALL). Over 23–255 (HSVAVNMPPE…GLLDRKEVLG (233 aa)) the chain is Extracellular. Disordered regions lie at residues 31–85 (PEDQ…PDAI) and 141–244 (TMAP…TGAS). Acidic residues predominate over residues 32-42 (EDQDGSGDDSD). The O-linked (Xyl...) (chondroitin sulfate) serine glycan is linked to S37. An N-linked (GlcNAc...) asparagine glycan is attached at N43. O-linked (Xyl...) (heparan sulfate) serine glycans are attached at residues S45 and S47. Residues 71-84 (TTTATAPEPTSPDA) are compositionally biased toward low complexity. Composition is skewed to basic and acidic residues over residues 151-162 (PHRDVQPDHHET) and 169-180 (GRMEPHRPHVEE). O-linked (Xyl...) (chondroitin sulfate) serine glycans are attached at residues S204 and S214. Positions 215-226 (GENAAGAAGEPG) are enriched in low complexity. Residues 256–276 (GVIAGGLVGLIFAVCLVGFML) form a helical membrane-spanning segment. Topologically, residues 277 to 311 (YRMKKKDEGSYSLEEPKQANGGAYQKPTKQEEFYA) are cytoplasmic. The disordered stretch occupies residues 285-311 (GSYSLEEPKQANGGAYQKPTKQEEFYA). A Phosphoserine modification is found at S286.

Belongs to the syndecan proteoglycan family. As to quaternary structure, interacts with CDCP1. Interacts (via C-terminus) with TIAM1 (via PDZ domain). Interacts with MDK. In terms of processing, shedding is enhanced by a number of factors such as heparanase, thrombin or EGF. Also by stress and wound healing. PMA-mediated shedding is inhibited by TIMP3.

The protein localises to the membrane. Its subcellular location is the secreted. It localises to the extracellular exosome. Its function is as follows. Cell surface proteoglycan that contains both heparan sulfate and chondroitin sulfate and that links the cytoskeleton to the interstitial matrix. Regulates exosome biogenesis in concert with SDCBP and PDCD6IP. Able to induce its own expression in dental mesenchymal cells and also in the neighboring dental epithelial cells via an MSX1-mediated pathway. This chain is Syndecan-1, found in Bos taurus (Bovine).